A 350-amino-acid polypeptide reads, in one-letter code: Probable aldo-keto reductase 1 (350 aa).

The active-site Proton donor is the Tyr-67. His-135 contacts substrate. 214-224 (SPLGKGFFSSG) contributes to the NADP(+) binding site.

Belongs to the aldo/keto reductase family.

The chain is Probable aldo-keto reductase 1 from Oryza sativa subsp. indica (Rice).